Consider the following 144-residue polypeptide: Large ribosomal subunit protein uL15 (144 aa).

A disordered region spans residues 1–45 (MNLNTLSPDPGSRPSRRRVGRGIGSGLGKTCGKGHKGQKSRAGGY). Residues 21-31 (RGIGSGLGKTC) show a composition bias toward gly residues.

The protein belongs to the universal ribosomal protein uL15 family. Part of the 50S ribosomal subunit.

Its function is as follows. Binds to the 23S rRNA. The polypeptide is Large ribosomal subunit protein uL15 (Legionella pneumophila (strain Paris)).